Consider the following 297-residue polypeptide: ATP phosphoribosyltransferase (297 aa).

This sequence belongs to the ATP phosphoribosyltransferase family.

The protein resides in the cytoplasm. The catalysed reaction is 1-(5-phospho-beta-D-ribosyl)-ATP + diphosphate = 5-phospho-alpha-D-ribose 1-diphosphate + ATP. It participates in amino-acid biosynthesis; L-histidine biosynthesis; L-histidine from 5-phospho-alpha-D-ribose 1-diphosphate: step 1/9. Functionally, catalyzes the condensation of ATP and 5-phosphoribose 1-diphosphate to form N'-(5'-phosphoribosyl)-ATP (PR-ATP). Has a crucial role in the pathway because the rate of histidine biosynthesis seems to be controlled primarily by regulation of the enzymatic activity. The protein is ATP phosphoribosyltransferase (HIS1) of Kluyveromyces lactis (strain ATCC 8585 / CBS 2359 / DSM 70799 / NBRC 1267 / NRRL Y-1140 / WM37) (Yeast).